The sequence spans 444 residues: Glutamyl-tRNA reductase (444 aa).

Residues 49 to 52 (TCNR), Ser109, 114 to 116 (ETQ), and Gln120 each bind substrate. Cys50 (nucleophile) is an active-site residue. 189–194 (GAGKMG) is an NADP(+) binding site.

This sequence belongs to the glutamyl-tRNA reductase family. Homodimer.

The catalysed reaction is (S)-4-amino-5-oxopentanoate + tRNA(Glu) + NADP(+) = L-glutamyl-tRNA(Glu) + NADPH + H(+). It functions in the pathway porphyrin-containing compound metabolism; protoporphyrin-IX biosynthesis; 5-aminolevulinate from L-glutamyl-tRNA(Glu): step 1/2. Its function is as follows. Catalyzes the NADPH-dependent reduction of glutamyl-tRNA(Glu) to glutamate 1-semialdehyde (GSA). This chain is Glutamyl-tRNA reductase, found in Bacillus cereus (strain ATCC 14579 / DSM 31 / CCUG 7414 / JCM 2152 / NBRC 15305 / NCIMB 9373 / NCTC 2599 / NRRL B-3711).